The primary structure comprises 166 residues: Interferon gamma (166 aa).

The N-terminal stretch at 1 to 23 (MKYTSYILALQLCVLLGFSGSYG) is a signal peptide. The residue at position 24 (Gln24) is a Pyrrolidone carboxylic acid. Asn39 and Asn106 each carry an N-linked (GlcNAc...) asparagine glycan.

This sequence belongs to the type II (or gamma) interferon family. Homodimer. Interacts with IFNGR1 (via extracellular domain); this interaction promotes IFNGR1 dimerization. As to expression, released primarily from activated T lymphocytes.

It localises to the secreted. Functionally, type II interferon produced by immune cells such as T-cells and NK cells that plays crucial roles in antimicrobial, antiviral, and antitumor responses by activating effector immune cells and enhancing antigen presentation. Primarily signals through the JAK-STAT pathway after interaction with its receptor IFNGR1 to affect gene regulation. Upon IFNG binding, IFNGR1 intracellular domain opens out to allow association of downstream signaling components JAK2, JAK1 and STAT1, leading to STAT1 activation, nuclear translocation and transcription of IFNG-regulated genes. Many of the induced genes are transcription factors such as IRF1 that are able to further drive regulation of a next wave of transcription. Plays a role in class I antigen presentation pathway by inducing a replacement of catalytic proteasome subunits with immunoproteasome subunits. In turn, increases the quantity, quality, and repertoire of peptides for class I MHC loading. Increases the efficiency of peptide generation also by inducing the expression of activator PA28 that associates with the proteasome and alters its proteolytic cleavage preference. Up-regulates as well MHC II complexes on the cell surface by promoting expression of several key molecules such as cathepsins B/CTSB, H/CTSH, and L/CTSL. Participates in the regulation of hematopoietic stem cells during development and under homeostatic conditions by affecting their development, quiescence, and differentiation. This chain is Interferon gamma (IFNG), found in Cervus elaphus (Red deer).